The chain runs to 391 residues: Putative 12-oxophytodienoate reductase 6 (391 aa).

FMN-binding positions include 42-44 (PMT), Ala-75, and Gln-117. Substrate is bound at residue 189 to 192 (HGAN). The active-site Proton donor is Tyr-194. Position 241 (Arg-241) interacts with FMN. Residue Arg-282 participates in substrate binding. FMN is bound by residues Gly-312 and 333-334 (GR). A disordered region spans residues 372–391 (YPFLDEHHHDDDDDSNAPSA). Acidic residues predominate over residues 382–391 (DDDDSNAPSA).

Belongs to the NADH:flavin oxidoreductase/NADH oxidase family. FMN is required as a cofactor.

Its function is as follows. Putative oxophytodienoate reductase that may be involved in the biosynthesis or metabolism of oxylipin signaling molecules. The protein is Putative 12-oxophytodienoate reductase 6 (OPR6) of Oryza sativa subsp. japonica (Rice).